The following is a 63-amino-acid chain: MASVCEICAKGELSGNNVSHSHLKTRRTWKPNIQRVRAVVEGEVKRVNVCTRCLRSGKVQRAL.

This sequence belongs to the bacterial ribosomal protein bL28 family.

The sequence is that of Large ribosomal subunit protein bL28 (rpmB) from Selenomonas ruminantium.